A 186-amino-acid polypeptide reads, in one-letter code: Elongation factor P (186 aa).

It belongs to the elongation factor P family.

It is found in the cytoplasm. The protein operates within protein biosynthesis; polypeptide chain elongation. Functionally, involved in peptide bond synthesis. Stimulates efficient translation and peptide-bond synthesis on native or reconstituted 70S ribosomes in vitro. Probably functions indirectly by altering the affinity of the ribosome for aminoacyl-tRNA, thus increasing their reactivity as acceptors for peptidyl transferase. The protein is Elongation factor P of Synechococcus sp. (strain RCC307).